The following is a 469-amino-acid chain: MIHVYNTLSREKEAFHAITPGKVNMYVCGPTVYNYIHIGNARSAIAFDVIRRYLEYSGYVVNYVSNFTDVDDKIIQRAREEGVDEMTIADKYAQAFDEDTIPLNIKPATTRSRATAVIPDIIAFVEDLIHKGYAYESAGDVYFRAKKFKGYGILAHQDLAEMEANAAGRLDDQELTRKEDPIDFAVWKASHSSDEISWVSPWGKGRPGWHIECSVMAQKYLADTIDIHGGGIDLAFPHHTNEIAQSEARTGQTFVNYWLHNGFVNVNDEKMSKSLGNFTTVHDMLAHYDDPMVIRYLLATTQYRRPINYAPDTLEQARAELERIRTAYRNVFFRISTAKTGHDDSVDYAIAEHISHFREAMDDDFNTQNAIASIFELVTIANNYASRDEIKLDTATRLTHAIADLMNVFGVNGLSEHLTLSAEAQALLDKRVQARAVRDFNLSDQLRDQLSDMGIIVEDTTQGQRWHHA.

Cys28 contributes to the Zn(2+) binding site. A 'HIGH' region motif is present at residues 30–40; it reads PTVYNYIHIGN. Zn(2+)-binding residues include Cys213, His238, and Glu242. The 'KMSKS' region signature appears at 270-274; the sequence is KMSKS. Position 273 (Lys273) interacts with ATP.

The protein belongs to the class-I aminoacyl-tRNA synthetase family. In terms of assembly, monomer. Zn(2+) is required as a cofactor.

The protein resides in the cytoplasm. It carries out the reaction tRNA(Cys) + L-cysteine + ATP = L-cysteinyl-tRNA(Cys) + AMP + diphosphate. The protein is Cysteine--tRNA ligase of Leuconostoc citreum (strain KM20).